Reading from the N-terminus, the 495-residue chain is YTH domain-containing protein ECT3 (495 aa).

The YTH domain maps to 261–398; sequence AKFYVIKSYS…EQGIKVIKIF (138 aa). RNA is bound by residues 267 to 269, Asp273, 283 to 284, Asn316, Trp340, Trp345, and Trp353; these read KSY and WS.

As to expression, expressed in the shoot apex, at the sites of leaf formation, and in emerging leaves.

It localises to the cytoplasm. Its function is as follows. Specifically recognizes and binds N6-methyladenosine (m6A)-containing RNAs, and regulates mRNA stability. M6A is a modification present at internal sites of mRNAs and some non-coding RNAs and plays a role in mRNA stability and processing. Required for the correct timing of leaf formation and normal leaf morphology. Required for proper trichome branching and morphology. Functions redundantly with ECT2. The protein is YTH domain-containing protein ECT3 of Arabidopsis thaliana (Mouse-ear cress).